A 362-amino-acid polypeptide reads, in one-letter code: G-protein coupled receptor homolog US27 (362 aa).

Topologically, residues 1–34 (MTTSTNNQTLTQVSNMTNHTLNSTEIYQLFEYTR) are virion surface. N-linked (GlcNAc...) asparagine; by host glycans are attached at residues Asn-7, Asn-15, Asn-18, and Asn-22. A helical transmembrane segment spans residues 35–58 (LGVWLMCIVGTFLNVLVITTILYY). The Intravirion segment spans residues 59–67 (RRKKKSPSD). A helical membrane pass occupies residues 68 to 90 (TYICNLAVADLLIVVGLPFFLEY). Residues 91–104 (AKHHPKLSREVVCS) lie on the Virion surface side of the membrane. Residues 105-126 (GLNACFYICLFAGVCFLINLSM) traverse the membrane as a helical segment. Residues 127–148 (DRYCVIVWGVELNRVRNNKRAT) lie on the Intravirion side of the membrane. The helical transmembrane segment at 149–167 (CWVVIFWILAVLMGMPHYL) threads the bilayer. At 168–193 (MYSHTNNECVGEFANETSGWFPVFLN) the chain is on the virion surface side. Residues 194–213 (TKVNICGYLAPIALMAYTYN) traverse the membrane as a helical segment. Residues 214 to 233 (RMVRFIINYVGKWHMQTLHV) lie on the Intravirion side of the membrane. Residues 234 to 257 (LLVVVVSFASFWFPFNLALFLESI) form a helical membrane-spanning segment. Over 258 to 274 (RLLAGVYNDTLQNVIIF) the chain is Virion surface. Residues 275–298 (CLYVGQFLAYVRACLNPGIYILVG) form a helical membrane-spanning segment. The Intravirion segment spans residues 299-362 (TQMRKDMWTT…MESGEEEFLL (64 aa)). The disordered stretch occupies residues 341–362 (TKRTHYDRKNAPMESGEEEFLL).

The protein belongs to the G-protein coupled receptor 1 family. In terms of assembly, heterodimer with US28. Interacts with host Gi alpha-1 subunit GNAI1; this interaction does not lead to the catalytic activation of Gi complex.

It is found in the virion. The protein resides in the host cell membrane. In terms of biological role, interacts with the host Gi complex without activating it, thereby probably interfering with the chemokine-Gi signaling. May also function as a G protein sink to sequester G protein from the cell surface via internalization. Plays an important role in spread of HCMV via the extracellular route. The sequence is that of G-protein coupled receptor homolog US27 (US27) from Homo sapiens (Human).